The primary structure comprises 596 residues: MHRYRSHNCAALRKCDVGTQVRLSGWVHRVRDHGGILFVDLRDHFGITQIVVNPDSSAFQIMEKVRSEWVICVDGKVCARSDEVINTTLPTGEIEIFADEIEILSKSDELPLPVFGEPDYPEDIRLKYRFLDLRRVTMHKNIMRRTEIISSIRRHMQDSGFTEFTTPLLTASSPEGARDFLVPSRIHQGKFYALPQAPQQYKQLLMMSGFDRYFQIAPCFRDEDPRADRLPGEFYQLDIEMSFVEQEDVLATMEPIIRSVFEEFSDGKLVTQSFPRISYDEAMRKYGSDKPDLRNPIIIEDVSQHFYDSDFKVFAQILANNENAQVWAIPAKTGGNRAFCDRMNGWAQGEGQPGLGYIFWRKEGENFEGAGPIAKNIGEQRTEAIRTQLGLKEGDACFFVAGDPKKFASFAGASRTRIGEELDLIDSKCFSFAWIVDFPFFEWNEDEKKIDFAHNPFSMPQGGMNAVDSQDPLTIKAFQYDLVCNGYEIASGGIRNHSPEMMLKVFNLAGLSREIVEERFGGLYRAFHYGAPPHGGMAAGVDRIVMLLQGVKNLREISLFPMNQQALDLLMSAPSDVSATQLNDLGIRIFPKVNNA.

Glu175 provides a ligand contact to L-aspartate. Positions 199-202 (QQYK) are aspartate. Positions 221 and 454 each coordinate L-aspartate. ATP is bound at residue 221–223 (RDE). Residue Glu488 participates in ATP binding. Position 495 (Arg495) interacts with L-aspartate. An ATP-binding site is contributed by 540-543 (GVDR).

This sequence belongs to the class-II aminoacyl-tRNA synthetase family. Type 1 subfamily. As to quaternary structure, homodimer.

It is found in the cytoplasm. It carries out the reaction tRNA(Asx) + L-aspartate + ATP = L-aspartyl-tRNA(Asx) + AMP + diphosphate. Aspartyl-tRNA synthetase with relaxed tRNA specificity since it is able to aspartylate not only its cognate tRNA(Asp) but also tRNA(Asn). Reaction proceeds in two steps: L-aspartate is first activated by ATP to form Asp-AMP and then transferred to the acceptor end of tRNA(Asp/Asn). This is Aspartate--tRNA(Asp/Asn) ligase from Bartonella bacilliformis (strain ATCC 35685 / KC583 / Herrer 020/F12,63).